The chain runs to 27 residues: uncharacterized protein (27 aa).

This is an uncharacterized protein from Saccharomyces cerevisiae (strain ATCC 204508 / S288c) (Baker's yeast).